Reading from the N-terminus, the 594-residue chain is Actin-histidine N-methyltransferase (594 aa).

Residues M1–P22 are disordered. Residues Q10–V20 show a composition bias toward polar residues. S-adenosyl-L-methionine is bound by residues R75, E104–F106, R254, D275–H279, and S325–F327. The 221-residue stretch at E94 to G314 folds into the SET domain. A Phosphoserine modification is found at S513. The tract at residues E549–E594 is disordered. Residues G555–Q572 show a composition bias toward polar residues. The segment covering E573–K582 has biased composition (basic and acidic residues). A compositionally biased stretch (polar residues) spans G583 to E594.

Belongs to the class V-like SAM-binding methyltransferase superfamily. SETD3 actin-histidine methyltransferase family. As to quaternary structure, interacts with MYOD1. In terms of processing, phosphorylated by GSK3B, which is required for recognition by the SCF(FBXW7) complex and subsequent degradation. Post-translationally, ubiquitinated by the SCF(FBXW7) complex following phosphorylation by GSK3B, leading to its degradation by the proteasome.

It is found in the cytoplasm. The protein localises to the nucleus. It carries out the reaction L-histidyl-[protein] + S-adenosyl-L-methionine = N(tele)-methyl-L-histidyl-[protein] + S-adenosyl-L-homocysteine + H(+). Functionally, protein-histidine N-methyltransferase that specifically mediates 3-methylhistidine (tele-methylhistidine) methylation of actin at 'His-73'. Histidine methylation of actin is required for smooth muscle contraction of the laboring uterus during delivery. Does not have protein-lysine N-methyltransferase activity and probably only catalyzes histidine methylation of actin. The sequence is that of Actin-histidine N-methyltransferase from Homo sapiens (Human).